Here is a 288-residue protein sequence, read N- to C-terminus: Phosphatidylserine decarboxylase proenzyme (288 aa).

Catalysis depends on charge relay system; for autoendoproteolytic cleavage activity residues D88, H145, and S248. S248 (schiff-base intermediate with substrate; via pyruvic acid; for decarboxylase activity) is an active-site residue. The residue at position 248 (S248) is a Pyruvic acid (Ser); by autocatalysis.

The protein belongs to the phosphatidylserine decarboxylase family. PSD-B subfamily. Prokaryotic type I sub-subfamily. Heterodimer of a large membrane-associated beta subunit and a small pyruvoyl-containing alpha subunit. Pyruvate serves as cofactor. Post-translationally, is synthesized initially as an inactive proenzyme. Formation of the active enzyme involves a self-maturation process in which the active site pyruvoyl group is generated from an internal serine residue via an autocatalytic post-translational modification. Two non-identical subunits are generated from the proenzyme in this reaction, and the pyruvate is formed at the N-terminus of the alpha chain, which is derived from the carboxyl end of the proenzyme. The autoendoproteolytic cleavage occurs by a canonical serine protease mechanism, in which the side chain hydroxyl group of the serine supplies its oxygen atom to form the C-terminus of the beta chain, while the remainder of the serine residue undergoes an oxidative deamination to produce ammonia and the pyruvoyl prosthetic group on the alpha chain. During this reaction, the Ser that is part of the protease active site of the proenzyme becomes the pyruvoyl prosthetic group, which constitutes an essential element of the active site of the mature decarboxylase.

Its subcellular location is the cell membrane. It catalyses the reaction a 1,2-diacyl-sn-glycero-3-phospho-L-serine + H(+) = a 1,2-diacyl-sn-glycero-3-phosphoethanolamine + CO2. It functions in the pathway phospholipid metabolism; phosphatidylethanolamine biosynthesis; phosphatidylethanolamine from CDP-diacylglycerol: step 2/2. Catalyzes the formation of phosphatidylethanolamine (PtdEtn) from phosphatidylserine (PtdSer). The sequence is that of Phosphatidylserine decarboxylase proenzyme from Azoarcus sp. (strain BH72).